Consider the following 320-residue polypeptide: Sucrose operon repressor (320 aa).

The 55-residue stretch at Met1 to Ala55 folds into the HTH lacI-type domain. A DNA-binding region (H-T-H motif) is located at residues Ile4–Asn23.

Functionally, negative regulator of scrB expression. This chain is Sucrose operon repressor (scrR), found in Staphylococcus xylosus.